A 197-amino-acid chain; its full sequence is Large ribosomal subunit protein bL25 (197 aa).

Belongs to the bacterial ribosomal protein bL25 family. CTC subfamily. Part of the 50S ribosomal subunit; part of the 5S rRNA/L5/L18/L25 subcomplex. Contacts the 5S rRNA. Binds to the 5S rRNA independently of L5 and L18.

This is one of the proteins that binds to the 5S RNA in the ribosome where it forms part of the central protuberance. The polypeptide is Large ribosomal subunit protein bL25 (Pseudomonas putida (strain ATCC 700007 / DSM 6899 / JCM 31910 / BCRC 17059 / LMG 24140 / F1)).